A 163-amino-acid polypeptide reads, in one-letter code: Superoxide dismutase [Mn] (163 aa).

Mn(2+)-binding residues include His-2, His-50, Asp-134, and His-138.

This sequence belongs to the iron/manganese superoxide dismutase family. Mn(2+) is required as a cofactor.

The catalysed reaction is 2 superoxide + 2 H(+) = H2O2 + O2. In terms of biological role, destroys superoxide anion radicals which are normally produced within the cells and which are toxic to biological systems. The chain is Superoxide dismutase [Mn] (sodA) from Mycobacterium scrofulaceum.